Reading from the N-terminus, the 599-residue chain is Adenine deaminase (599 aa).

The protein belongs to the metallo-dependent hydrolases superfamily. Adenine deaminase family. Mn(2+) is required as a cofactor.

It carries out the reaction adenine + H2O + H(+) = hypoxanthine + NH4(+). The sequence is that of Adenine deaminase from Clostridium botulinum (strain Langeland / NCTC 10281 / Type F).